An 82-amino-acid chain; its full sequence is MMAKLMITVMTVFFLSLQQGADGLFERWRKNQMAASRIMGNLITARLDPPGYCTHKICYEDGECNQWCTAGCNPDTGKCDTT.

The N-terminal stretch at 1–23 is a signal peptide; the sequence is MMAKLMITVMTVFFLSLQQGADG. A propeptide spanning residues 24–46 is cleaved from the precursor; the sequence is LFERWRKNQMAASRIMGNLITAR. 4-hydroxyproline is present on residues Pro49 and Pro50. 3 cysteine pairs are disulfide-bonded: Cys53–Cys68, Cys58–Cys72, and Cys64–Cys79. 2 positions are modified to 4-carboxyglutamate: Glu60 and Glu63.

It belongs to the Pg turripeptide superfamily. In terms of tissue distribution, expressed by the venom duct.

The protein localises to the secreted. This Gemmula sogodensis (Gem-turris) protein is Turripeptide Gsg9.1.